The following is a 289-amino-acid chain: MRDRLPDLTACRTNDDGDTAVVIVEKDHFMDGFFHQVEEIRSSIARIAQHVEDVKKNHSIILSAPNPEGKIKEELEDLDKEIKKTANRIRGKLKSIEQSCDQDENGNRTSVDLRIRRTQHSVLSRKFVDVMTEYNEAQILFRERSKGRIQRQLEITGRTTTDDELEEMLESGKPSIFISDIISDSQITRQALNEIESRHKDIMKLETSIRELHEMFMDMAMFVETQGEMVNNIERNVVNSVDYVEHAKEETKKAIKYQSKARRKKWIIAAVAVAVIAVLALIIGLSVGK.

The Cytoplasmic portion of the chain corresponds to 1–265; that stretch reads MRDRLPDLTA…KYQSKARRKK (265 aa). A coiled-coil region spans residues 68-101; sequence EGKIKEELEDLDKEIKKTANRIRGKLKSIEQSCD. Residues 192-254 form the t-SNARE coiled-coil homology domain; sequence LNEIESRHKD…EHAKEETKKA (63 aa). Residues 266–289 traverse the membrane as a helical; Anchor for type IV membrane protein segment; sequence WIIAAVAVAVIAVLALIIGLSVGK.

This sequence belongs to the syntaxin family. As to quaternary structure, interacts with SYT6 and SYT8; the interaction is Ca(2+)-dependent.

It localises to the membrane. Its function is as follows. Essential for epithelial morphogenesis. May mediate Ca(2+)-regulation of exocytosis acrosomal reaction in sperm. This is Syntaxin-2 (Stx2) from Mus musculus (Mouse).